The following is a 793-amino-acid chain: DNA mismatch repair protein MutS (793 aa).

589–596 (GPNMSGKS) provides a ligand contact to ATP.

This sequence belongs to the DNA mismatch repair MutS family.

This protein is involved in the repair of mismatches in DNA. It is possible that it carries out the mismatch recognition step. This protein has a weak ATPase activity. The chain is DNA mismatch repair protein MutS from Thermotoga sp. (strain RQ2).